A 225-amino-acid polypeptide reads, in one-letter code: PKHD-type hydroxylase HEAR3399 (225 aa).

One can recognise a Fe2OG dioxygenase domain in the interval 77-177; that stretch reads RYMPPLFNRY…RVCSFFWLQS (101 aa). Fe cation contacts are provided by histidine 95, aspartate 97, and histidine 158. Arginine 168 is a binding site for 2-oxoglutarate.

Fe(2+) is required as a cofactor. L-ascorbate serves as cofactor.

This Herminiimonas arsenicoxydans protein is PKHD-type hydroxylase HEAR3399.